Here is a 233-residue protein sequence, read N- to C-terminus: Large ribosomal subunit protein uL1 (233 aa).

This sequence belongs to the universal ribosomal protein uL1 family. In terms of assembly, part of the 50S ribosomal subunit.

In terms of biological role, binds directly to 23S rRNA. The L1 stalk is quite mobile in the ribosome, and is involved in E site tRNA release. Protein L1 is also a translational repressor protein, it controls the translation of the L11 operon by binding to its mRNA. The polypeptide is Large ribosomal subunit protein uL1 (Photobacterium profundum (strain SS9)).